A 497-amino-acid polypeptide reads, in one-letter code: 3-octaprenyl-4-hydroxybenzoate carboxy-lyase (497 aa).

Asn175 lines the Mn(2+) pocket. Residues 178-180 (IYR), 192-194 (RWL), and 197-198 (RG) each bind prenylated FMN. Glu241 is a Mn(2+) binding site. The Proton donor role is filled by Asp290.

Belongs to the UbiD family. Homohexamer. Prenylated FMN is required as a cofactor. Mn(2+) serves as cofactor.

It localises to the cell membrane. It carries out the reaction a 4-hydroxy-3-(all-trans-polyprenyl)benzoate + H(+) = a 2-(all-trans-polyprenyl)phenol + CO2. The protein operates within cofactor biosynthesis; ubiquinone biosynthesis. Its function is as follows. Catalyzes the decarboxylation of 3-octaprenyl-4-hydroxy benzoate to 2-octaprenylphenol, an intermediate step in ubiquinone biosynthesis. In Shigella dysenteriae serotype 1 (strain Sd197), this protein is 3-octaprenyl-4-hydroxybenzoate carboxy-lyase.